The chain runs to 374 residues: MILCGDSVAGNSTGEMFRVTTFGSSHGPAVGAVIDGCPAGLELSEDDIQQELNRRRPGTGALTTPRAESDRVEILSGIFRGRTDGTPIAGIVRNLDADSKSYSNIKNTPRPGHGDYTWRARFRNYDYRGGGRGSGRVTIGHVIGGAVAKKLIGNYGLTVTGHVVQVGDVKADTVSLKRIGEYAESNPVRCADPRAARQMEKVILDARSRGDSVGGVVEVVVLGAPPGLGDPVFSKLDADMARALMGIGSVKGVEIGMGFEVAEHRASEINDEFYLDDDGKVRTTTNTSGGILGGISSGMPITARIAVKPTPSISVPQKTVDLERMEETTIEVRGRHDPCICPRVVPVAEAAVAIVLADHMIRAGFIHPTYIGNE.

Arg55 serves as a coordination point for NADP(+). FMN-binding positions include 132–134 (RGS), Gly293, 308–312 (KPTPS), and Arg335.

Belongs to the chorismate synthase family. The cofactor is FMNH2.

It catalyses the reaction 5-O-(1-carboxyvinyl)-3-phosphoshikimate = chorismate + phosphate. It participates in metabolic intermediate biosynthesis; chorismate biosynthesis; chorismate from D-erythrose 4-phosphate and phosphoenolpyruvate: step 7/7. Catalyzes the anti-1,4-elimination of the C-3 phosphate and the C-6 proR hydrogen from 5-enolpyruvylshikimate-3-phosphate (EPSP) to yield chorismate, which is the branch point compound that serves as the starting substrate for the three terminal pathways of aromatic amino acid biosynthesis. This reaction introduces a second double bond into the aromatic ring system. The polypeptide is Chorismate synthase (Methanothermobacter thermautotrophicus (strain ATCC 29096 / DSM 1053 / JCM 10044 / NBRC 100330 / Delta H) (Methanobacterium thermoautotrophicum)).